Consider the following 154-residue polypeptide: NADPH-dependent 7-cyano-7-deazaguanine reductase (154 aa).

The segment covering 1–13 (MSKTDVSGLSQLG) has biased composition (polar residues). The tract at residues 1–24 (MSKTDVSGLSQLGRQVDAPTSPET) is disordered. C52 functions as the Thioimide intermediate in the catalytic mechanism. The active-site Proton donor is D59. Substrate is bound by residues 74-76 (VES) and 93-94 (HE).

Belongs to the GTP cyclohydrolase I family. QueF type 1 subfamily.

The protein localises to the cytoplasm. It catalyses the reaction 7-aminomethyl-7-carbaguanine + 2 NADP(+) = 7-cyano-7-deazaguanine + 2 NADPH + 3 H(+). It participates in tRNA modification; tRNA-queuosine biosynthesis. Functionally, catalyzes the NADPH-dependent reduction of 7-cyano-7-deazaguanine (preQ0) to 7-aminomethyl-7-deazaguanine (preQ1). In Allorhizobium ampelinum (strain ATCC BAA-846 / DSM 112012 / S4) (Agrobacterium vitis (strain S4)), this protein is NADPH-dependent 7-cyano-7-deazaguanine reductase.